Reading from the N-terminus, the 306-residue chain is Protoheme IX farnesyltransferase (306 aa).

8 consecutive transmembrane segments (helical) span residues V31–W50, L55–I77, L104–W124, L125–L145, W168–L188, G218–A235, L238–G258, and A286–F306.

This sequence belongs to the UbiA prenyltransferase family. Protoheme IX farnesyltransferase subfamily.

The protein localises to the cell membrane. The catalysed reaction is heme b + (2E,6E)-farnesyl diphosphate + H2O = Fe(II)-heme o + diphosphate. The protein operates within porphyrin-containing compound metabolism; heme O biosynthesis; heme O from protoheme: step 1/1. Its function is as follows. Converts heme B (protoheme IX) to heme O by substitution of the vinyl group on carbon 2 of heme B porphyrin ring with a hydroxyethyl farnesyl side group. The sequence is that of Protoheme IX farnesyltransferase from Clavibacter michiganensis subsp. michiganensis (strain NCPPB 382).